A 1058-amino-acid polypeptide reads, in one-letter code: Carbamoyl phosphate synthase large chain (1058 aa).

The carboxyphosphate synthetic domain stretch occupies residues 1-401; it reads MPKRTDIQKI…SLLKACRSLE (401 aa). Positions 129, 169, 175, 176, 208, 210, 215, 241, 242, 243, 284, and 298 each coordinate ATP. One can recognise an ATP-grasp 1 domain in the interval 133–327; it reads KQLMEELEQP…IAKLAAKIAV (195 aa). Mg(2+) is bound by residues Gln-284, Glu-298, and Asn-300. 3 residues coordinate Mn(2+): Gln-284, Glu-298, and Asn-300. The oligomerization domain stretch occupies residues 402–546; sequence IGVHHNEIPE…YSTYGWENES (145 aa). The interval 547–929 is carbamoyl phosphate synthetic domain; sequence IRSDKESVLV…ALYKAFEASY (383 aa). The 191-residue stretch at 671–861 folds into the ATP-grasp 2 domain; it reads EQALKELDIP…MAQVATKLIL (191 aa). Positions 707, 746, 748, 752, 777, 778, 779, 780, 820, and 832 each coordinate ATP. Mg(2+) contacts are provided by Gln-820, Glu-832, and Asn-834. Gln-820, Glu-832, and Asn-834 together coordinate Mn(2+). Positions 930-1058 constitute an MGS-like domain; that stretch reads LHLPTFGNVV…ESRSFVTEAI (129 aa). An allosteric domain region spans residues 930 to 1058; the sequence is LHLPTFGNVV…ESRSFVTEAI (129 aa).

It belongs to the CarB family. As to quaternary structure, composed of two chains; the small (or glutamine) chain promotes the hydrolysis of glutamine to ammonia, which is used by the large (or ammonia) chain to synthesize carbamoyl phosphate. Tetramer of heterodimers (alpha,beta)4. Mg(2+) serves as cofactor. It depends on Mn(2+) as a cofactor.

The catalysed reaction is hydrogencarbonate + L-glutamine + 2 ATP + H2O = carbamoyl phosphate + L-glutamate + 2 ADP + phosphate + 2 H(+). It carries out the reaction hydrogencarbonate + NH4(+) + 2 ATP = carbamoyl phosphate + 2 ADP + phosphate + 2 H(+). The protein operates within amino-acid biosynthesis; L-arginine biosynthesis; carbamoyl phosphate from bicarbonate: step 1/1. It functions in the pathway pyrimidine metabolism; UMP biosynthesis via de novo pathway; (S)-dihydroorotate from bicarbonate: step 1/3. Functionally, large subunit of the glutamine-dependent carbamoyl phosphate synthetase (CPSase). CPSase catalyzes the formation of carbamoyl phosphate from the ammonia moiety of glutamine, carbonate, and phosphate donated by ATP, constituting the first step of 2 biosynthetic pathways, one leading to arginine and/or urea and the other to pyrimidine nucleotides. The large subunit (synthetase) binds the substrates ammonia (free or transferred from glutamine from the small subunit), hydrogencarbonate and ATP and carries out an ATP-coupled ligase reaction, activating hydrogencarbonate by forming carboxy phosphate which reacts with ammonia to form carbamoyl phosphate. The polypeptide is Carbamoyl phosphate synthase large chain (Streptococcus pneumoniae (strain P1031)).